Here is a 121-residue protein sequence, read N- to C-terminus: Large ribosomal subunit protein uL14 (121 aa).

It belongs to the universal ribosomal protein uL14 family. As to quaternary structure, part of the 50S ribosomal subunit. Forms a cluster with proteins L3 and L19. In the 70S ribosome, L14 and L19 interact and together make contacts with the 16S rRNA in bridges B5 and B8.

Binds to 23S rRNA. Forms part of two intersubunit bridges in the 70S ribosome. This Parabacteroides distasonis (strain ATCC 8503 / DSM 20701 / CIP 104284 / JCM 5825 / NCTC 11152) protein is Large ribosomal subunit protein uL14.